We begin with the raw amino-acid sequence, 105 residues long: 5-hydroxymethyl-dUMP N-hydrolase (105 aa).

5-hydroxymethyl-dUMP is bound by residues G6, I8, S42, G44, E48, and S72.

It belongs to the 2'-deoxynucleoside 5'-phosphate N-hydrolase 1 family. As to quaternary structure, monomer and homodimer.

The protein resides in the cytoplasm. It localises to the nucleus. The enzyme catalyses 5-hydroxymethyl-dUMP + H2O = 5-hydroxymethyluracil + 2-deoxy-D-ribose 5-phosphate. In terms of biological role, part of a nucleotide salvage pathway that eliminates epigenetically modified 5-hydroxymethyl-dCMP (hmdCMP) in a two-step process entailing deamination to cytotoxic 5-hydroxymethyl-dUMP (hmdUMP), followed by its hydrolysis into 5-hydroxymethyluracil (hmU) and 2-deoxy-D-ribose 5-phosphate (deoxyribosephosphate). Catalyzes the second step in that pathway, the hydrolysis of the N-glycosidic bond in hmdUMP, degrading this cytotoxic nucleotide to avoid its genomic integration. This chain is 5-hydroxymethyl-dUMP N-hydrolase, found in Branchiostoma floridae (Florida lancelet).